The chain runs to 415 residues: Zona pellucida-like domain-containing protein 1 (415 aa).

Positions 1 to 19 (MERVWLLFLLAIRVSPGSA) are cleaved as a signal peptide. Residues 20-373 (QFNSYNCDAN…PFQLNAVTSS (354 aa)) lie on the Extracellular side of the membrane. One can recognise a ZP domain in the interval 43-320 (YCGVQAITMK…PICGNRKRRD (278 aa)). 2 cysteine pairs are disulfide-bonded: Cys-44-Cys-155 and Cys-79-Cys-104. Residue Asn-164 is glycosylated (N-linked (GlcNAc...) asparagine). Intrachain disulfides connect Cys-235–Cys-296 and Cys-255–Cys-313. The helical transmembrane segment at 374-394 (LISGMVILGVLCFSLLLCSLA) threads the bilayer. At 395–415 (LLHRKGSTSLVLNGVRNPVFE) the chain is on the cytoplasmic side.

Post-translationally, proteolytically cleaved before the transmembrane segment to yield the secreted form found in the extracellular matrix of the cupula.

The protein localises to the cytoplasmic vesicle membrane. The protein resides in the secreted. It is found in the extracellular space. Its subcellular location is the extracellular matrix. Functionally, glycoprotein which is a component of the gelatinous extracellular matrix in the cupulae of the vestibular organ. The protein is Zona pellucida-like domain-containing protein 1 (Zpld1) of Mus musculus (Mouse).